Here is a 430-residue protein sequence, read N- to C-terminus: Dihydrolipoyllysine-residue acetyltransferase component of pyruvate dehydrogenase complex (430 aa).

The Lipoyl-binding domain occupies 2–77; sequence AFEFRLPDIG…VVGDVIVKID (76 aa). An N6-lipoyllysine modification is found at K43. The disordered stretch occupies residues 80-122; it reads DAEDMQFKGHDDDSSSKEEPAKEEAPAEQAPVATQTEEVDENR. A compositionally biased stretch (basic and acidic residues) spans 84-104; that stretch reads MQFKGHDDDSSSKEEPAKEEA. A Peripheral subunit-binding (PSBD) domain is found at 125-162; it reads KAMPSVRKYAREKGVNIKAVSGSGKNGRITKEDVDAYL. The tract at residues 164–200 is disordered; it reads GGAPTASNESADSATNEEVAETPAAPAAVSLEGDFPE. Over residues 177-192 the composition is skewed to low complexity; that stretch reads ATNEEVAETPAAPAAV. The active site involves H401.

This sequence belongs to the 2-oxoacid dehydrogenase family. As to quaternary structure, forms a 24-polypeptide structural core with octahedral symmetry. The cofactor is (R)-lipoate.

It carries out the reaction N(6)-[(R)-dihydrolipoyl]-L-lysyl-[protein] + acetyl-CoA = N(6)-[(R)-S(8)-acetyldihydrolipoyl]-L-lysyl-[protein] + CoA. Functionally, the pyruvate dehydrogenase complex catalyzes the overall conversion of pyruvate to acetyl-CoA and CO(2). It contains multiple copies of three enzymatic components: pyruvate dehydrogenase (E1), dihydrolipoamide acetyltransferase (E2) and lipoamide dehydrogenase (E3). This is Dihydrolipoyllysine-residue acetyltransferase component of pyruvate dehydrogenase complex (pdhC) from Staphylococcus aureus.